The following is a 231-amino-acid chain: uncharacterized protein (231 aa).

Helical transmembrane passes span 6–26 (IKLI…YKYI), 39–59 (NIVS…STFS), and 66–86 (FCFQ…GYAF).

The protein resides in the cell membrane. This is an uncharacterized protein from Rickettsia prowazekii (strain Madrid E).